Consider the following 209-residue polypeptide: Cytidylyl-2-hydroxypropylphosphonate hydrolase (209 aa).

Residues N111, D127, E129, and D131 each coordinate a divalent metal cation. The Proton donor role is filled by K144. D145 provides a ligand contact to a divalent metal cation.

Belongs to the FomD family. Monomer in solution. It depends on Mn(2+) as a cofactor. The cofactor is Co(2+).

It carries out the reaction cytidine 5'-({hydroxy[(S)-2-hydroxypropyl]phosphonoyl}phosphate) + H2O = (S)-2-hydroxypropylphosphonate + CMP + H(+). The protein operates within antibiotic biosynthesis; fosfomycin biosynthesis. Its activity is regulated as follows. Hydrolysis of (S)-HPP-CMP is inhibited by CDP. In terms of biological role, involved in fosfomycin biosynthesis. Catalyzes the hydrolysis of cytidylyl (S)-2-hydroxypropylphosphonate ((S)-HPP-CMP) to give (S)-2-hydroxypropylphosphonate ((S)-HPP) and CMP. Can also hydrolyze (R)-HPP-CMP and cytidylyl 2-hydroxyethylphosphonate (HEP-CMP), which is a biosynthetic intermediate before C-methylation, but the catalytic efficiency is much higher with (S)-HPP-CMP. In Streptomyces wedmorensis, this protein is Cytidylyl-2-hydroxypropylphosphonate hydrolase.